A 450-amino-acid chain; its full sequence is MKATKTTYKKDPMGLTPSQIVNELNRFIVGQEKAKKAVAIALRNRCRRKRVEGNLRNEIVPKNILMIGSTGVGKTEIARRLAKLTNSPFYKIEATKFTEVGYVGRDVESIIRDLVEIAVNTEKTLAKTKVDIHAREKAIERILDSLVGKTSSSETREKFKEKILNGELDDKEIEISVADTTPVGGGSFEIPGMPGASMGVLNLGDMIGRALGSSKTKTKKMLVKDAMAIIIPEESEKLIDQEKIIQQAINLAENDGIVFIDEIDKIASTGSSGAKNAEISREGVQRDLLPLIEGTTVNTKYGPVKTDHILFIASGAFHIAKPSDLLPELQGRLPIRVELNSLTKDDMIKILLEPETSLIKQYSALIGTEDVHLEFAASAIEKIADYAITVNLEVEDIGARRLHTILENLLEDISFEASEMKGKKITIDDKFVENQLSKIITNLDLAKFVL.

ATP is bound by residues valine 29, 71-76 (GVGKTE), aspartate 261, glutamate 328, and arginine 400.

Belongs to the ClpX chaperone family. HslU subfamily. In terms of assembly, a double ring-shaped homohexamer of HslV is capped on each side by a ring-shaped HslU homohexamer. The assembly of the HslU/HslV complex is dependent on binding of ATP.

The protein localises to the cytoplasm. Its function is as follows. ATPase subunit of a proteasome-like degradation complex; this subunit has chaperone activity. The binding of ATP and its subsequent hydrolysis by HslU are essential for unfolding of protein substrates subsequently hydrolyzed by HslV. HslU recognizes the N-terminal part of its protein substrates and unfolds these before they are guided to HslV for hydrolysis. This is ATP-dependent protease ATPase subunit HslU from Rickettsia conorii (strain ATCC VR-613 / Malish 7).